The chain runs to 191 residues: Molybdenum cofactor guanylyltransferase (191 aa).

Residues 11–13 (LCG), Lys23, Asp66, and Asp97 each bind GTP. Asp97 contributes to the Mg(2+) binding site.

Belongs to the MobA family. In terms of assembly, monomer. The cofactor is Mg(2+).

The protein localises to the cytoplasm. It carries out the reaction Mo-molybdopterin + GTP + H(+) = Mo-molybdopterin guanine dinucleotide + diphosphate. Functionally, transfers a GMP moiety from GTP to Mo-molybdopterin (Mo-MPT) cofactor (Moco or molybdenum cofactor) to form Mo-molybdopterin guanine dinucleotide (Mo-MGD) cofactor. This chain is Molybdenum cofactor guanylyltransferase, found in Campylobacter jejuni subsp. jejuni serotype O:6 (strain 81116 / NCTC 11828).